A 649-amino-acid chain; its full sequence is Glycerol-3-phosphate dehydrogenase, mitochondrial (649 aa).

Residue 69-97 participates in FAD binding; the sequence is DVLIIGGGATGTGVAVDASTRGLNVCLLE.

Belongs to the FAD-dependent glycerol-3-phosphate dehydrogenase family. FAD is required as a cofactor.

The protein localises to the mitochondrion. The enzyme catalyses a quinone + sn-glycerol 3-phosphate = dihydroxyacetone phosphate + a quinol. Its pathway is polyol metabolism; glycerol degradation via glycerol kinase pathway; glycerone phosphate from sn-glycerol 3-phosphate (anaerobic route): step 1/1. In Schizosaccharomyces pombe (strain 972 / ATCC 24843) (Fission yeast), this protein is Glycerol-3-phosphate dehydrogenase, mitochondrial (gut2).